The chain runs to 342 residues: L-threonine 3-dehydrogenase (342 aa).

Cysteine 38 provides a ligand contact to Zn(2+). Residues threonine 40 and histidine 43 each act as charge relay system in the active site. The Zn(2+) site is built by histidine 63, glutamate 64, cysteine 93, cysteine 96, cysteine 99, and cysteine 107. NAD(+) contacts are provided by residues isoleucine 175, aspartate 195, arginine 200, 262–264, and 286–287; these read LGI and IY.

Belongs to the zinc-containing alcohol dehydrogenase family. In terms of assembly, homotetramer. Requires Zn(2+) as cofactor.

The protein resides in the cytoplasm. It catalyses the reaction L-threonine + NAD(+) = (2S)-2-amino-3-oxobutanoate + NADH + H(+). It functions in the pathway amino-acid degradation; L-threonine degradation via oxydo-reductase pathway; glycine from L-threonine: step 1/2. In terms of biological role, catalyzes the NAD(+)-dependent oxidation of L-threonine to 2-amino-3-ketobutyrate. This is L-threonine 3-dehydrogenase from Burkholderia cenocepacia (strain ATCC BAA-245 / DSM 16553 / LMG 16656 / NCTC 13227 / J2315 / CF5610) (Burkholderia cepacia (strain J2315)).